The primary structure comprises 150 residues: Probable antibacterial peptide (150 aa).

A signal peptide spans 1–19 (MHIARFCLLSSMAVLALSA).

Its subcellular location is the secreted. In terms of biological role, has antibacterial activity in vitro. In Riptortus clavatus (Bean bug), this protein is Probable antibacterial peptide.